Consider the following 598-residue polypeptide: Centrosomal protein of 70 kDa (598 aa).

The segment covering 16–38 (DSTKEPLSTVTSQAQDSSLSANR) has biased composition (polar residues). Residues 16–43 (DSTKEPLSTVTSQAQDSSLSANRPVTEK) are disordered. Coiled-coil stretches lie at residues 99 to 210 (TRQQ…EEDR) and 255 to 317 (TYKG…NIKL). The TPR repeat unit spans residues 484–517 (NGVYPRMNEVYARLGEMNNAVRNLQELLGLDSSS).

In terms of assembly, directly interacts with tubulin-gamma; this interaction determines centrosomal localization.

It is found in the cytoplasm. Its subcellular location is the cytoskeleton. The protein resides in the microtubule organizing center. It localises to the centrosome. Plays a role in the organization of both preexisting and nascent microtubules in interphase cells. During mitosis, required for the organization and orientation of the mitotic spindle. The chain is Centrosomal protein of 70 kDa (Cep70) from Rattus norvegicus (Rat).